We begin with the raw amino-acid sequence, 262 residues long: uncharacterized protein (262 aa).

A run of 6 helical transmembrane segments spans residues isoleucine 21–phenylalanine 41, isoleucine 94–leucine 114, leucine 139–leucine 159, leucine 164–valine 184, isoleucine 205–isoleucine 225, and leucine 240–phenylalanine 260.

The protein resides in the cell membrane. This is an uncharacterized protein from Methanocaldococcus jannaschii (strain ATCC 43067 / DSM 2661 / JAL-1 / JCM 10045 / NBRC 100440) (Methanococcus jannaschii).